Here is a 1507-residue protein sequence, read N- to C-terminus: DE-cadherin (1507 aa).

The signal sequence occupies residues M1–A69. Positions L70–R261 are excised as a propeptide. Cadherin domains lie at V97–F195, M204–F301, L311–Y412, I420–F522, L532–E633, I631–L733, and W741–A835. Topologically, residues P262–N1328 are extracellular. 3 N-linked (GlcNAc...) asparagine glycosylation sites follow: N317, N466, and N552. N-linked (GlcNAc...) asparagine glycans are attached at residues N766, N949, N983, N999, and N1073. Positions V1084–C1123 constitute an EGF-like domain. Cystine bridges form between C1098–C1112 and C1114–C1123. Residues L1125 to C1313 enclose the Laminin G-like domain. N-linked (GlcNAc...) asparagine glycosylation is found at N1145, N1274, and N1290. A disulfide bridge links C1287 with C1313. A helical transmembrane segment spans residues F1329 to V1349. Over Q1350–I1507 the chain is Cytoplasmic. Positions Q1350–I1507 are interaction with Inx2. The tract at residues Y1488 to I1507 is disordered. S1493 is subject to Phosphoserine.

As to quaternary structure, interacts (via cytoplasmic region) with Inx2 (via cytoplasmic loop). Interacts with Hakai. Interacts with Myo31DF. In terms of processing, N-glycosylation is important for biosynthesis and function. In terms of tissue distribution, in early stage 9 and stage 10 oocytes, expressed in border cells, strongly expressed in polar cells and very weakly expressed in the nurse cells (at protein level). In the embryo, expressed in the leading edge cells of the dorsal epidermis (at protein level). Stage 10 embryos exhibit intense expression in epithelial cells. Stage 14 embryos show expression in the hindgut (at the apical poles of cell-cell boundaries), at the apical junctions of tracheal cells and in the dorsal longitudinal trunk. In stage 16 embryos the glial midline cells of the central nervous system show strong expression.

Its subcellular location is the cell membrane. The protein resides in the apical cell membrane. Functionally, cadherins are calcium-dependent cell adhesion proteins. In connecting cells they preferentially interact with themselves in a homophilic manner; cadherins may thus contribute to the sorting of heterogeneous cell types. During oogenesis, integral component of the guidance mechanisms that regulate the directional persistent collective migration of the border cell (BC) cluster through the nurse cells to the oocyte. Functions downstream of the two chemoattractant receptors, Pvr and Egfr, to promote BC adhesion between the leader cells of the migrating cluster and the surrounding nurse cells. This adhesion increases Rac1 signaling in the leading cells, which in turn stabilizes DE-cadherin/DE-cadherin adhesions through the formation of forward-directed protrusions which attach/detach to the surrounding nurse cells in order to pull the cluster through the egg chamber to the oocyte. Within the BC cluster, also promotes adhesion between BCs, and between BCs and polar cells which enables the lead BC to communicate direction to the other cells in the cluster, providing polarity to each individual cell and ensuring collective behavior. May function in cell intercalation in the lateral epidermis during germband extension. Contributes to the determination of body left-right asymmetry by enhancing Myo31DF activity and inhibiting Myo61F activity. This chain is DE-cadherin, found in Drosophila melanogaster (Fruit fly).